A 259-amino-acid polypeptide reads, in one-letter code: Tryptophan synthase alpha chain (259 aa).

Active-site proton acceptor residues include Glu48 and Asp59.

This sequence belongs to the TrpA family. As to quaternary structure, tetramer of two alpha and two beta chains.

The catalysed reaction is (1S,2R)-1-C-(indol-3-yl)glycerol 3-phosphate + L-serine = D-glyceraldehyde 3-phosphate + L-tryptophan + H2O. The protein operates within amino-acid biosynthesis; L-tryptophan biosynthesis; L-tryptophan from chorismate: step 5/5. The alpha subunit is responsible for the aldol cleavage of indoleglycerol phosphate to indole and glyceraldehyde 3-phosphate. The protein is Tryptophan synthase alpha chain of Syntrophomonas wolfei subsp. wolfei (strain DSM 2245B / Goettingen).